Consider the following 232-residue polypeptide: Small ribosomal subunit protein uS3 (232 aa).

The KH type-2 domain occupies 39-107 (VRQFLTKELA…PAQINIAEVR (69 aa)).

This sequence belongs to the universal ribosomal protein uS3 family. Part of the 30S ribosomal subunit. Forms a tight complex with proteins S10 and S14.

Binds the lower part of the 30S subunit head. Binds mRNA in the 70S ribosome, positioning it for translation. The protein is Small ribosomal subunit protein uS3 of Yersinia pestis bv. Antiqua (strain Antiqua).